The primary structure comprises 328 residues: Porphobilinogen deaminase (328 aa).

An S-(dipyrrolylmethanemethyl)cysteine modification is found at C250.

The protein belongs to the HMBS family. In terms of assembly, monomer. Requires dipyrromethane as cofactor.

The enzyme catalyses 4 porphobilinogen + H2O = hydroxymethylbilane + 4 NH4(+). It functions in the pathway porphyrin-containing compound metabolism; protoporphyrin-IX biosynthesis; coproporphyrinogen-III from 5-aminolevulinate: step 2/4. Functionally, tetrapolymerization of the monopyrrole PBG into the hydroxymethylbilane pre-uroporphyrinogen in several discrete steps. The protein is Porphobilinogen deaminase of Burkholderia ambifaria (strain ATCC BAA-244 / DSM 16087 / CCUG 44356 / LMG 19182 / AMMD) (Burkholderia cepacia (strain AMMD)).